A 135-amino-acid polypeptide reads, in one-letter code: Holo-[acyl-carrier-protein] synthase (135 aa).

Residues Asp8 and Glu58 each coordinate Mg(2+).

The protein belongs to the P-Pant transferase superfamily. AcpS family. Requires Mg(2+) as cofactor.

Its subcellular location is the cytoplasm. The enzyme catalyses apo-[ACP] + CoA = holo-[ACP] + adenosine 3',5'-bisphosphate + H(+). Functionally, transfers the 4'-phosphopantetheine moiety from coenzyme A to a Ser of acyl-carrier-protein. The protein is Holo-[acyl-carrier-protein] synthase of Ligilactobacillus salivarius (strain UCC118) (Lactobacillus salivarius).